The primary structure comprises 607 residues: Monocarboxylate transporter 7 (607 aa).

The interval 1–84 is disordered; that stretch reads MRASGQGPQR…PAETGCSRSR (84 aa). Over 1–105 the chain is Cytoplasmic; the sequence is MRASGQGPQR…ANVYTQVPDG (105 aa). A helical membrane pass occupies residues 106–126; the sequence is GWGWAVAVSFFFVEVFTYGII. Residues 127 to 146 are Extracellular-facing; that stretch reads KSFGVFFNDLMDSFDESNSK. A helical transmembrane segment spans residues 147 to 167; it reads ISWIISICVFVLTFTAPLSTV. Over 168–175 the chain is Cytoplasmic; it reads LSNRFGHR. Residues 176 to 196 traverse the membrane as a helical segment; that stretch reads LVVMAGGLLISLGMITASFSQ. Residues 197–202 are Extracellular-facing; the sequence is RVYHMY. The chain crosses the membrane as a helical span at residues 203-223; that stretch reads ISIGVISGLGYCFSFLPTVTI. The Cytoplasmic portion of the chain corresponds to 224–233; the sequence is LSQYFDKRRS. A helical transmembrane segment spans residues 234-254; sequence VVTAVASTGECFAVFAFAPAI. The Extracellular segment spans residues 255–268; the sequence is TALKEHIGWRYSLL. A helical membrane pass occupies residues 269 to 289; sequence FVGLLQLNIMVCGALLRPIII. Residues 290–383 are Cytoplasmic-facing; that stretch reads QGPGQSPKAV…KEKSFICYAL (94 aa). A phosphoserine mark is found at serine 319, serine 322, serine 325, and serine 332. Residues 384–404 form a helical membrane-spanning segment; it reads FGLFATLGFFAPSLYIIPLGI. At 405-414 the chain is on the extracellular side; that stretch reads SLGIDPDRAA. A helical transmembrane segment spans residues 415–435; it reads FLLSTMAIAEVFGRIGAGFVL. Residues 436–442 are Cytoplasmic-facing; it reads NREPIRK. A helical transmembrane segment spans residues 443-463; that stretch reads IYIELICVILLTASLFAFTFA. Residues 464-465 lie on the Extracellular side of the membrane; sequence TE. A helical membrane pass occupies residues 466–486; that stretch reads FWGLMLCSVFFGSMVGTIGGT. Residues 487 to 507 lie on the Cytoplasmic side of the membrane; that stretch reads HIPMLAEDDVVGIEKMSSAAG. The helical transmembrane segment at 508 to 528 threads the bilayer; sequence VYVFIQSISGLAGPPLAGLLV. The Extracellular portion of the chain corresponds to 529 to 536; it reads DQSKIYSR. A helical membrane pass occupies residues 537 to 557; that stretch reads AFYSCAAGMCLAAVCLALVRP. The Cytoplasmic portion of the chain corresponds to 558-607; the sequence is CKKGLCQNSHSGENQTDRQRGKALQDIPEDFLEMDLGKCEHRAHMKMDPV.

It belongs to the major facilitator superfamily. Monocarboxylate porter (TC 2.A.1.13) family. In terms of assembly, forms functional complexes with BSG/CD147 or EMB/GP70 ancillary proteins.

The protein localises to the basolateral cell membrane. The catalysed reaction is taurine(out) = taurine(in). Monocarboxylate transporter selective for taurine. May associate with BSG/CD147 or EMB/GP70 ancillary proteins to mediate facilitative efflux or influx of taurine across the plasma membrane. The transport is pH- and sodium-independent. Rather low-affinity, is likely effective for taurine transport in tissues where taurine is present at high concentrations. This Mus musculus (Mouse) protein is Monocarboxylate transporter 7.